The chain runs to 682 residues: Methionine--tRNA ligase (682 aa).

A 'HIGH' region motif is present at residues 15-25; sequence PYANGAIHLGH. Residues Cys146, Cys149, Cys159, and Cys162 each contribute to the Zn(2+) site. The 'KMSKS' region motif lies at 331-335; it reads KMSKS. Lys334 lines the ATP pocket. Positions 580–682 constitute a tRNA-binding domain; sequence DFAKLDMRVA…SGVTAGMQVK (103 aa).

Belongs to the class-I aminoacyl-tRNA synthetase family. MetG type 1 subfamily. As to quaternary structure, homodimer. The cofactor is Zn(2+).

Its subcellular location is the cytoplasm. It catalyses the reaction tRNA(Met) + L-methionine + ATP = L-methionyl-tRNA(Met) + AMP + diphosphate. Functionally, is required not only for elongation of protein synthesis but also for the initiation of all mRNA translation through initiator tRNA(fMet) aminoacylation. The polypeptide is Methionine--tRNA ligase (Haemophilus influenzae (strain ATCC 51907 / DSM 11121 / KW20 / Rd)).